The following is a 122-amino-acid chain: Large ribosomal subunit protein uL14 (122 aa).

Belongs to the universal ribosomal protein uL14 family. As to quaternary structure, part of the 50S ribosomal subunit. Forms a cluster with proteins L3 and L19. In the 70S ribosome, L14 and L19 interact and together make contacts with the 16S rRNA in bridges B5 and B8.

In terms of biological role, binds to 23S rRNA. Forms part of two intersubunit bridges in the 70S ribosome. The sequence is that of Large ribosomal subunit protein uL14 from Rhodopirellula baltica (strain DSM 10527 / NCIMB 13988 / SH1).